Consider the following 97-residue polypeptide: uncharacterized protein (97 aa).

At S2 the chain carries N-acetylserine.

This is an uncharacterized protein from Mycobacterium tuberculosis (strain ATCC 25618 / H37Rv).